A 988-amino-acid polypeptide reads, in one-letter code: Protein SEMI-ROLLED LEAF 2 (988 aa).

The interval 844 to 865 (SVDGGLHESPITNTGSSISKTT) is disordered. Residues 853-865 (PITNTGSSISKTT) show a composition bias toward polar residues.

In terms of tissue distribution, expressed in root tips, and in the vascular bundles of leaf blades, leaf sheaths, and roots, especially in their sclerenchymatous cells.

It localises to the nucleus. The protein resides in the cytoplasm. Its function is as follows. Functions in regulating leaf rolling through abaxial side leaf cell differentiation. May be involved in the transdifferentiation process from mesophyll cells to sclerenchymatous cells. This is Protein SEMI-ROLLED LEAF 2 from Oryza sativa subsp. japonica (Rice).